The primary structure comprises 346 residues: Cyclic GMP-AMP synthase-like protein (346 aa).

ATP is bound by residues Ser58 and 70 to 72 (EFD). Residues Glu70, Asp72, and Asp165 each coordinate Mg(2+). Residues Asp165 and 212 to 219 (MVCAPHWE) contribute to the GTP site. Residues 216–219 (PHWE), Lys237, and 252–256 (SYMLK) each bind ATP.

It belongs to the mab-21 family. It depends on Mg(2+) as a cofactor. Mn(2+) serves as cofactor.

Activated in response of some unknown stimulus. Not activated in response to L-monocytogenes infection. Functionally, probable nucleotidyltransferase that catalyzes the formation of cyclic dinucleotide second messenger in response to some unknown stimulus. Does not catalyze the formation of cyclic GMP-AMP from ATP and GTP. The sequence is that of Cyclic GMP-AMP synthase-like protein from Drosophila melanogaster (Fruit fly).